Reading from the N-terminus, the 153-residue chain is Regulator of sigma D (153 aa).

Belongs to the Rsd/AlgQ family. Interacts with RpoD.

The protein resides in the cytoplasm. Functionally, binds RpoD and negatively regulates RpoD-mediated transcription activation by preventing the interaction between the primary sigma factor RpoD with the catalytic core of the RNA polymerase and with promoter DNA. May be involved in replacement of the RNA polymerase sigma subunit from RpoD to RpoS during the transition from exponential growth to the stationary phase. The chain is Regulator of sigma D from Pectobacterium carotovorum subsp. carotovorum (strain PC1).